We begin with the raw amino-acid sequence, 151 residues long: UPF0208 membrane protein KPN78578_26420 (151 aa).

The next 2 helical transmembrane spans lie at 46–65 (YAIRIMPPIAIFTLCWQIAL) and 69–91 (LGPAVATALFALSLPMQGLWWLG).

This sequence belongs to the UPF0208 family.

The protein resides in the cell inner membrane. This chain is UPF0208 membrane protein KPN78578_26420, found in Klebsiella pneumoniae subsp. pneumoniae (strain ATCC 700721 / MGH 78578).